A 180-amino-acid chain; its full sequence is Small ribosomal subunit protein uS4 (180 aa).

The 73-residue stretch at 102 to 174 folds into the S4 RNA-binding domain; the sequence is RRLQTMLVRK…PARKLEQKEE (73 aa). Residues 154 to 180 are disordered; that stretch reads VPFSPLANPEHPARKLEQKEETNEESA. The span at 164-174 shows a compositional bias: basic and acidic residues; the sequence is HPARKLEQKEE.

Belongs to the universal ribosomal protein uS4 family. Part of the 30S ribosomal subunit. Contacts protein S5. The interaction surface between S4 and S5 is involved in control of translational fidelity.

One of the primary rRNA binding proteins, it binds directly to 16S rRNA where it nucleates assembly of the body of the 30S subunit. Its function is as follows. With S5 and S12 plays an important role in translational accuracy. The polypeptide is Small ribosomal subunit protein uS4 (Nanoarchaeum equitans (strain Kin4-M)).